The chain runs to 57 residues: UPF0337 protein SAV_1088 (57 aa).

2 stretches are compositionally biased toward basic and acidic residues: residues 1–15 and 36–57; these read MAGD…EQAK and QAEK…VFKH. The interval 1-57 is disordered; the sequence is MAGDQKAKAKMEQAKGKAKAAAGRAVGNERMAAEGQAEKSKGDARQAKEKTKDVFKH.

Belongs to the UPF0337 (CsbD) family.

The chain is UPF0337 protein SAV_1088 from Streptomyces avermitilis (strain ATCC 31267 / DSM 46492 / JCM 5070 / NBRC 14893 / NCIMB 12804 / NRRL 8165 / MA-4680).